We begin with the raw amino-acid sequence, 443 residues long: Protein PRRC1 (443 aa).

The disordered stretch occupies residues 1–165 (MMEESGIETT…FSAPPVTGIL (165 aa)). The segment covering 29 to 45 (EAHSAATSSFSSPNVSG) has biased composition (polar residues). A compositionally biased stretch (pro residues) spans 59–72 (PSLPPVQPSAPPPF). 2 stretches are compositionally biased toward low complexity: residues 81–96 (VPLSGTSVPPSVSPSP) and 109–134 (PPATSASGALLSAPPSGPPISGFSVG). Phosphoserine is present on serine 406.

It belongs to the PRRC1 family. As to quaternary structure, interacts with PRKAR1A; resulting in PKA activation.

The protein localises to the golgi apparatus. The protein resides in the cytoplasm. Its function is as follows. May act as a regulator of the protein kinase A (PKA) during embryonic development. The chain is Protein PRRC1 (Prrc1) from Mus musculus (Mouse).